Here is a 279-residue protein sequence, read N- to C-terminus: MSSHSSPADTPSARKPVTLHTLREMHARGEKIAMITAYDASFAALVDTAGVDCILVGDSLGMVLKGQSSTLSVTMEQIGYHTRSTSRGTKAAFLIADMPFGSYQENPVQALRNAGTLMAAGAQMVKLEGGGWTPETVNFLVERGVPVCAHLGLTPQSVHALGGYRIQGKDEAGAATLRRHAKALADAGAAMMVLELMPSRVAREVQADNPGLMTIGIGAGAGTAGQVLVLHDMLGVTRGRLPRFVRNFMDSATSIEDAVRRYVAAVKDGSFPDETLHAY.

Mg(2+) contacts are provided by Asp58 and Asp97. Residues 58–59 (DS), Asp97, and Lys126 each bind 3-methyl-2-oxobutanoate. Glu128 is a binding site for Mg(2+). Glu195 serves as the catalytic Proton acceptor.

The protein belongs to the PanB family. Homodecamer; pentamer of dimers. It depends on Mg(2+) as a cofactor.

It localises to the cytoplasm. The catalysed reaction is 3-methyl-2-oxobutanoate + (6R)-5,10-methylene-5,6,7,8-tetrahydrofolate + H2O = 2-dehydropantoate + (6S)-5,6,7,8-tetrahydrofolate. Its pathway is cofactor biosynthesis; (R)-pantothenate biosynthesis; (R)-pantoate from 3-methyl-2-oxobutanoate: step 1/2. Catalyzes the reversible reaction in which hydroxymethyl group from 5,10-methylenetetrahydrofolate is transferred onto alpha-ketoisovalerate to form ketopantoate. The protein is 3-methyl-2-oxobutanoate hydroxymethyltransferase 2 of Methylibium petroleiphilum (strain ATCC BAA-1232 / LMG 22953 / PM1).